A 1202-amino-acid chain; its full sequence is Caffeine-induced protein 16 (1202 aa).

In terms of domain architecture, PAP-associated spans 1105–1159; sequence NIALLLRGFFCYYGLTTQYSFDWEAYMIDISSSQLKRKSTEFKDCPFVVLDPFLK.

This is Caffeine-induced protein 16 (cid16) from Schizosaccharomyces pombe (strain 972 / ATCC 24843) (Fission yeast).